A 156-amino-acid chain; its full sequence is SsrA-binding protein (156 aa).

The interval 135-156 is disordered; sequence HALRERQDRREADRAMSERKDR.

Belongs to the SmpB family.

The protein localises to the cytoplasm. In terms of biological role, required for rescue of stalled ribosomes mediated by trans-translation. Binds to transfer-messenger RNA (tmRNA), required for stable association of tmRNA with ribosomes. tmRNA and SmpB together mimic tRNA shape, replacing the anticodon stem-loop with SmpB. tmRNA is encoded by the ssrA gene; the 2 termini fold to resemble tRNA(Ala) and it encodes a 'tag peptide', a short internal open reading frame. During trans-translation Ala-aminoacylated tmRNA acts like a tRNA, entering the A-site of stalled ribosomes, displacing the stalled mRNA. The ribosome then switches to translate the ORF on the tmRNA; the nascent peptide is terminated with the 'tag peptide' encoded by the tmRNA and targeted for degradation. The ribosome is freed to recommence translation, which seems to be the essential function of trans-translation. The protein is SsrA-binding protein of Kineococcus radiotolerans (strain ATCC BAA-149 / DSM 14245 / SRS30216).